The sequence spans 357 residues: Membrane-bound lytic murein transglycosylase C (357 aa).

The first 16 residues, 1 to 16 (MKKLLALFVIAPILIS), serve as a signal peptide directing secretion. Cys-17 is lipidated: N-palmitoyl cysteine. The S-diacylglycerol cysteine moiety is linked to residue Cys-17.

It belongs to the transglycosylase Slt family.

Its subcellular location is the cell outer membrane. The catalysed reaction is Exolytic cleavage of the (1-&gt;4)-beta-glycosidic linkage between N-acetylmuramic acid (MurNAc) and N-acetylglucosamine (GlcNAc) residues in peptidoglycan, from either the reducing or the non-reducing ends of the peptidoglycan chains, with concomitant formation of a 1,6-anhydrobond in the MurNAc residue.. Functionally, murein-degrading enzyme. May play a role in recycling of muropeptides during cell elongation and/or cell division. This is Membrane-bound lytic murein transglycosylase C from Photorhabdus laumondii subsp. laumondii (strain DSM 15139 / CIP 105565 / TT01) (Photorhabdus luminescens subsp. laumondii).